Here is a 113-residue protein sequence, read N- to C-terminus: Flagellar transcriptional regulator FlhD (113 aa).

It belongs to the FlhD family. As to quaternary structure, homodimer; disulfide-linked. Forms a heterohexamer composed of two FlhC and four FlhD subunits. Each FlhC binds a FlhD dimer, forming a heterotrimer, and a hexamer assembles by dimerization of two heterotrimers.

Its subcellular location is the cytoplasm. Functions in complex with FlhC as a master transcriptional regulator that regulates transcription of several flagellar and non-flagellar operons by binding to their promoter region. Activates expression of class 2 flagellar genes, including fliA, which is a flagellum-specific sigma factor that turns on the class 3 genes. Also regulates genes whose products function in a variety of physiological pathways. The protein is Flagellar transcriptional regulator FlhD of Salmonella typhi.